Reading from the N-terminus, the 280-residue chain is F-box only protein 27 (280 aa).

An F-box domain is found at 20-67; sequence VLDLSRLPPELLLLVLSHVPPRTLLMHCRRVCRAWRALVDGQALWLLL. Positions 101–277 constitute an FBA domain; that stretch reads FCALRPLGRN…VTNSSVIIRV (177 aa).

Part of a SCF (SKP1-cullin-F-box) protein ligase complex. Interacts with SKP1 and CUL1. Detected in brain, heart and muscle.

Substrate-recognition component of the SCF (SKP1-CUL1-F-box protein)-type E3 ubiquitin ligase complex. Able to recognize and bind complex-type oligosaccharides. This Mus musculus (Mouse) protein is F-box only protein 27 (Fbxo27).